A 35-amino-acid polypeptide reads, in one-letter code: Cupiennin-2b (35 aa).

Gln35 is subject to Glutamine amide.

As to expression, expressed by the venom gland.

The protein resides in the secreted. In Cupiennius salei (American wandering spider), this protein is Cupiennin-2b.